A 128-amino-acid chain; its full sequence is UPF0292 protein MJ1624 (128 aa).

The 83-residue stretch at 23–105 (EKPIIVEGKR…KVNTKIRHEI (83 aa)) folds into the Toprim domain. Residues glutamate 29, aspartate 74, and aspartate 76 each coordinate Mg(2+).

This sequence belongs to the UPF0292 family. Mg(2+) is required as a cofactor.

In Methanocaldococcus jannaschii (strain ATCC 43067 / DSM 2661 / JAL-1 / JCM 10045 / NBRC 100440) (Methanococcus jannaschii), this protein is UPF0292 protein MJ1624.